Here is a 396-residue protein sequence, read N- to C-terminus: Gap junction gamma-1 protein (396 aa).

Residues 1-22 lie on the Cytoplasmic side of the membrane; sequence MSWSFLTRLLEEIHNHSTFVGK. The helical transmembrane segment at 23–45 threads the bilayer; the sequence is IWLTVLIVFRIVLTAVGGESIYY. Topologically, residues 46–75 are extracellular; the sequence is DEQSKFVCNTEQPGCENVCYDAFAPLSHVR. A helical membrane pass occupies residues 76–95; that stretch reads FWVFQIILVATPSVMYLGYA. Residues 96–175 are Cytoplasmic-facing; the sequence is IHKIAKMEHG…RRIREDGLMK (80 aa). The segment at 146-165 is disordered; that stretch reads LESEKENKDQNQSKPKHDGR. Positions 147–156 are enriched in basic and acidic residues; the sequence is ESEKENKDQN. A helical membrane pass occupies residues 176–198; that stretch reads IYVLQLLARTVFEVGFLVGQYFL. The Extracellular portion of the chain corresponds to 199–228; the sequence is YGFQVHPFYVCSRLPCPHKIDCFISRPTEK. A helical membrane pass occupies residues 229-248; sequence TIFLLIMYGVTGLCLLLNIW. The Cytoplasmic segment spans residues 249-396; that stretch reads EMLHLGFGTI…SGDGKTSVWI (148 aa). The interval 356-396 is disordered; that stretch reads YNHQNNPHGSREKKAKVGSKAGSNKSSASSKSGDGKTSVWI. Low complexity predominate over residues 373-396; the sequence is GSKAGSNKSSASSKSGDGKTSVWI.

It belongs to the connexin family. Gamma-type subfamily. In terms of assembly, a connexon is composed of a hexamer of connexins. Interacts with CNST.

The protein resides in the cell membrane. Its subcellular location is the cell junction. It localises to the gap junction. One gap junction consists of a cluster of closely packed pairs of transmembrane channels, the connexons, through which materials of low MW diffuse from one cell to a neighboring cell. The protein is Gap junction gamma-1 protein (GJC1) of Bos taurus (Bovine).